The following is a 23-amino-acid chain: Alyteserin-1c (23 aa).

Serine 23 bears the Serine amide mark.

As to expression, expressed by the skin glands.

Its subcellular location is the secreted. The protein resides in the target cell membrane. In terms of biological role, antibacterial peptide with amphipathic alpha-helical structure that shows selective growth-inhibitory activity against Gram-negative bacteria but low hemolytic activity against human erythrocytes (LC(50)=145-220 uM). It is moderately active against the Gram-negative bacteria E.coli (MIC=25 uM), K.pneumoniae (MIC=50 uM), P.aeruginosa (MIC=25 uM), A.baumannii (MIC=6 uM), and is weaky active against the Gram-positive S.aureus (MIC=100-250 uM). The chain is Alyteserin-1c from Alytes obstetricans (Common midwife toad).